Here is a 646-residue protein sequence, read N- to C-terminus: Phosphomethylpyrimidine synthase (646 aa).

Residues 1–13 (MNIRSNPDTTRPA) are compositionally biased toward polar residues. The tract at residues 1-30 (MNIRSNPDTTRPAVTTGALPSSRKMFSAPD) is disordered. Substrate-binding positions include Asn221, Met250, Tyr279, His315, 335 to 337 (SRG), 376 to 379 (DGLR), and Glu415. A Zn(2+)-binding site is contributed by His419. A substrate-binding site is contributed by Tyr442. His483 is a binding site for Zn(2+). Residues Cys563, Cys566, and Cys571 each contribute to the [4Fe-4S] cluster site.

This sequence belongs to the ThiC family. In terms of assembly, homodimer. The cofactor is [4Fe-4S] cluster.

It carries out the reaction 5-amino-1-(5-phospho-beta-D-ribosyl)imidazole + S-adenosyl-L-methionine = 4-amino-2-methyl-5-(phosphooxymethyl)pyrimidine + CO + 5'-deoxyadenosine + formate + L-methionine + 3 H(+). Its pathway is cofactor biosynthesis; thiamine diphosphate biosynthesis. Functionally, catalyzes the synthesis of the hydroxymethylpyrimidine phosphate (HMP-P) moiety of thiamine from aminoimidazole ribotide (AIR) in a radical S-adenosyl-L-methionine (SAM)-dependent reaction. This Nitrobacter winogradskyi (strain ATCC 25391 / DSM 10237 / CIP 104748 / NCIMB 11846 / Nb-255) protein is Phosphomethylpyrimidine synthase.